The sequence spans 249 residues: Pyridoxine 5'-phosphate synthase (249 aa).

Asn-10 provides a ligand contact to 3-amino-2-oxopropyl phosphate. 12-13 is a 1-deoxy-D-xylulose 5-phosphate binding site; it reads DH. Residue Arg-21 participates in 3-amino-2-oxopropyl phosphate binding. The active-site Proton acceptor is the His-46. Arg-48 and His-53 together coordinate 1-deoxy-D-xylulose 5-phosphate. Glu-73 (proton acceptor) is an active-site residue. Position 103 (Thr-103) interacts with 1-deoxy-D-xylulose 5-phosphate. The active-site Proton donor is the His-194. 3-amino-2-oxopropyl phosphate is bound by residues Gly-195 and 216–217; that span reads GH.

It belongs to the PNP synthase family. As to quaternary structure, homooctamer; tetramer of dimers.

It is found in the cytoplasm. It carries out the reaction 3-amino-2-oxopropyl phosphate + 1-deoxy-D-xylulose 5-phosphate = pyridoxine 5'-phosphate + phosphate + 2 H2O + H(+). It participates in cofactor biosynthesis; pyridoxine 5'-phosphate biosynthesis; pyridoxine 5'-phosphate from D-erythrose 4-phosphate: step 5/5. Functionally, catalyzes the complicated ring closure reaction between the two acyclic compounds 1-deoxy-D-xylulose-5-phosphate (DXP) and 3-amino-2-oxopropyl phosphate (1-amino-acetone-3-phosphate or AAP) to form pyridoxine 5'-phosphate (PNP) and inorganic phosphate. The sequence is that of Pyridoxine 5'-phosphate synthase from Rhodospirillum rubrum (strain ATCC 11170 / ATH 1.1.1 / DSM 467 / LMG 4362 / NCIMB 8255 / S1).